The primary structure comprises 268 residues: Small ribosomal subunit protein eS1 (268 aa).

Positions Met-1 to Val-21 are disordered.

It belongs to the eukaryotic ribosomal protein eS1 family. As to quaternary structure, component of the small ribosomal subunit. Mature ribosomes consist of a small (40S) and a large (60S) subunit. The 40S subunit contains about 33 different proteins and 1 molecule of RNA (18S). The 60S subunit contains about 49 different proteins and 3 molecules of RNA (28S, 5.8S and 5S).

Its subcellular location is the cytoplasm. In terms of biological role, essential for oogenesis; required for late follicle cell development. The polypeptide is Small ribosomal subunit protein eS1 (Drosophila sechellia (Fruit fly)).